The sequence spans 255 residues: Ribosomal RNA small subunit methyltransferase A (255 aa).

Residues Asn-13, Leu-15, Gly-40, Glu-61, Asp-85, and Asn-103 each coordinate S-adenosyl-L-methionine.

The protein belongs to the class I-like SAM-binding methyltransferase superfamily. rRNA adenine N(6)-methyltransferase family. RsmA subfamily.

Its subcellular location is the cytoplasm. It catalyses the reaction adenosine(1518)/adenosine(1519) in 16S rRNA + 4 S-adenosyl-L-methionine = N(6)-dimethyladenosine(1518)/N(6)-dimethyladenosine(1519) in 16S rRNA + 4 S-adenosyl-L-homocysteine + 4 H(+). Its function is as follows. Specifically dimethylates two adjacent adenosines (A1518 and A1519) in the loop of a conserved hairpin near the 3'-end of 16S rRNA in the 30S particle. May play a critical role in biogenesis of 30S subunits. This Dechloromonas aromatica (strain RCB) protein is Ribosomal RNA small subunit methyltransferase A.